The sequence spans 160 residues: Transcriptional repressor NrdR (160 aa).

A zinc finger spans residues 3-34 (CPYCQYEDTQVKDSRPSEEGTVIRRRRICSVC). The region spanning 49–139 (LLVLKKSGRY…VYRDFRNASD (91 aa)) is the ATP-cone domain.

Belongs to the NrdR family. It depends on Zn(2+) as a cofactor.

Negatively regulates transcription of bacterial ribonucleotide reductase nrd genes and operons by binding to NrdR-boxes. This is Transcriptional repressor NrdR from Bartonella henselae (strain ATCC 49882 / DSM 28221 / CCUG 30454 / Houston 1) (Rochalimaea henselae).